The sequence spans 213 residues: Uridine kinase (213 aa).

14–21 provides a ligand contact to ATP; it reads GASASGKS.

It belongs to the uridine kinase family.

The protein resides in the cytoplasm. The enzyme catalyses uridine + ATP = UMP + ADP + H(+). The catalysed reaction is cytidine + ATP = CMP + ADP + H(+). It participates in pyrimidine metabolism; CTP biosynthesis via salvage pathway; CTP from cytidine: step 1/3. It functions in the pathway pyrimidine metabolism; UMP biosynthesis via salvage pathway; UMP from uridine: step 1/1. This Vibrio atlanticus (strain LGP32) (Vibrio splendidus (strain Mel32)) protein is Uridine kinase.